The sequence spans 192 residues: Fe/S biogenesis protein NfuA (192 aa).

Residues Cys-149 and Cys-152 each contribute to the [4Fe-4S] cluster site.

Belongs to the NfuA family. In terms of assembly, homodimer. Requires [4Fe-4S] cluster as cofactor.

In terms of biological role, involved in iron-sulfur cluster biogenesis. Binds a 4Fe-4S cluster, can transfer this cluster to apoproteins, and thereby intervenes in the maturation of Fe/S proteins. Could also act as a scaffold/chaperone for damaged Fe/S proteins. In Shewanella frigidimarina (strain NCIMB 400), this protein is Fe/S biogenesis protein NfuA.